A 359-amino-acid polypeptide reads, in one-letter code: MDFISFKEKEISKKECLELFENTENFFDVIKLADSLRKDIVGDAVTYVVNANINFTNICTGTCGFCAYKAEHGDPHAFFLNPDEVAKKALEARKIGATEVCIQGGLLKEIDTYFQAEILKKVKEITAPYGKIDVHAFSPMEVKSAAENAGLNVKEALKILKESGLNSMPGTAAEILNDEIRSEICPTKLKTSEWIDVVSNAHKTGIKTTCTMMYGHVEENDHLAEHLSILRNIQKETGGFTEFVPLTFLHENAPLYHTERVKSGASGMLDLKVYAISRIFFKDSIKNIQTSWVKLGTKLSQVSLNCGANDIGGTLMEENISKSAGGSYGTYMSEEQLKDMVLAVGRIPKQRNTAYEIIE.

Residues 45–282 enclose the Radical SAM core domain; it reads VTYVVNANIN…VYAISRIFFK (238 aa). Cys-59, Cys-63, and Cys-66 together coordinate [4Fe-4S] cluster.

Belongs to the radical SAM superfamily. CofH family. In terms of assembly, consists of two subunits, CofG and CofH. It depends on [4Fe-4S] cluster as a cofactor.

The enzyme catalyses 5-amino-6-(D-ribitylamino)uracil + L-tyrosine + S-adenosyl-L-methionine = 5-amino-5-(4-hydroxybenzyl)-6-(D-ribitylimino)-5,6-dihydrouracil + 2-iminoacetate + 5'-deoxyadenosine + L-methionine + H(+). Its pathway is cofactor biosynthesis; coenzyme F0 biosynthesis. In terms of biological role, catalyzes the radical-mediated synthesis of 5-amino-5-(4-hydroxybenzyl)-6-(D-ribitylimino)-5,6-dihydrouracil from 5-amino-6-(D-ribitylamino)uracil and L-tyrosine. This Methanococcus maripaludis (strain C7 / ATCC BAA-1331) protein is 5-amino-6-(D-ribitylamino)uracil--L-tyrosine 4-hydroxyphenyl transferase.